The following is a 346-amino-acid chain: L-glyceraldehyde 3-phosphate reductase (346 aa).

NADP(+)-binding residues include tryptophan 33, aspartate 61, tyrosine 66, serine 168, glutamine 193, threonine 223, leucine 225, glutamine 227, lysine 233, serine 303, glutamine 307, and asparagine 311.

This sequence belongs to the shaker potassium channel beta subunit family. In terms of assembly, homotetramer. Homooctamer.

The catalysed reaction is a primary alcohol + NADP(+) = an aldehyde + NADPH + H(+). The enzyme catalyses hydroxyacetone + NADP(+) = methylglyoxal + NADPH + H(+). In terms of biological role, aldo-keto reductase that catalyzes the stereospecific, NADPH-dependent reduction of L-glyceraldehyde 3-phosphate (L-GAP) to L-glycerol 3-phosphate (L-G3P). The physiological role of Gpr is the detoxification of L-GAP, which may be formed via non-enzymatic and/or enzymatic racemization of D-GAP. Also contributes to cellular methylglyoxal detoxification by catalyzing the NADPH-dependent conversion of methylglyoxal to acetol. However, the catalytic efficiency of methylglyoxal reductase activity is more than 2 orders of magnitude lower than the L-GAP reductase activity. In addition, exhibits activity with glyoxal and probably plays a significant role in detoxification of glyoxal in vivo. Shows broad specificity and can use aromatic aldehydes such as 4-nitrobenzaldehyde and benzaldehyde, D,L-glyceraldehyde, phenylglyoxal, isatin and the model substrate 4-nitrobenzaldehyde. The sequence is that of L-glyceraldehyde 3-phosphate reductase from Escherichia coli (strain K12).